A 176-amino-acid chain; its full sequence is Sperm-egg fusion protein TMEM95 (176 aa).

Residues 1 to 16 form the signal peptide; it reads MWVLALGGAFLAVAKA. Intrachain disulfides connect Cys17-Cys119, Cys20-Cys122, Cys106-Cys129, and Cys110-Cys135. At 17 to 146 the chain is on the extracellular side; it reads CIFCRLQDHA…PDSHDLWDAR (130 aa). 2 N-linked (GlcNAc...) asparagine glycosylation sites follow: Asn36 and Asn118. The chain crosses the membrane as a helical span at residues 147–167; it reads ILLLCIFGIVLLSGVVSLQVE. Residues 168 to 176 are Cytoplasmic-facing; that stretch reads YLNLQAKDL.

It belongs to the TMEM95 family. Does not interact with sperm-egg fusion proteins IZUMO1 or IZUMO1R/JUNO. N-glycosylated. Expressed exclusively in testis.

It localises to the cytoplasmic vesicle. Its subcellular location is the secretory vesicle. The protein localises to the acrosome membrane. In terms of biological role, sperm protein required for fusion of sperm with the egg membrane during fertilization. This is Sperm-egg fusion protein TMEM95 from Mus musculus (Mouse).